A 218-amino-acid chain; its full sequence is Adenylate kinase (218 aa).

12 to 17 (GAGKGT) lines the ATP pocket. Residues 32 to 61 (STGDIFRKNISENTPLGIEAKSYMDNGQLV) form an NMP region. AMP-binding positions include T33, R38, 59-61 (QLV), 87-90 (GFPR), and Q94. Residues 128–165 (GRRVCPSCGASYHIKFNPPTNDGKCDLCGSDVIQRKDD) form an LID region. ATP is bound at residue R129. The Zn(2+) site is built by C132 and C135. 138–139 (SY) is an ATP binding site. The Zn(2+) site is built by C152 and C155. R162 and R173 together coordinate AMP. Q201 is an ATP binding site.

It belongs to the adenylate kinase family. In terms of assembly, monomer.

It is found in the cytoplasm. The catalysed reaction is AMP + ATP = 2 ADP. The protein operates within purine metabolism; AMP biosynthesis via salvage pathway; AMP from ADP: step 1/1. Its function is as follows. Catalyzes the reversible transfer of the terminal phosphate group between ATP and AMP. Plays an important role in cellular energy homeostasis and in adenine nucleotide metabolism. In Clostridium perfringens (strain 13 / Type A), this protein is Adenylate kinase.